The sequence spans 256 residues: Capsid protein (256 aa).

The Bipartite nuclear localization signal signature appears at 3–20; that stretch reads KRPADIVISTPASKVRRK. A Nuclear localization signal motif is present at residues 40-54; sequence RRRTWVNRPMYRKPM. The segment at 68-85 is a zinc-finger region; it reads CEGPCKVQSYEQRHDVAH. The Nuclear export signal motif lies at 101 to 122; the sequence is ITHRTGKRFCIKSIYVLGKIWM. Residues 200 to 247 carry the Bipartite nuclear localization signal motif; sequence NRFYKIYNHCTYNHQEAAKYENHTENALLLYMACTHASNPVYATLKIR.

It belongs to the geminiviridae capsid protein family. Homomultimer. Binds to single-stranded and double-stranded viral DNA. Interacts (via nuclear localization signals) with host importin alpha-1a.

Its subcellular location is the virion. It localises to the host nucleus. Its function is as follows. Encapsidates the viral genome into characteristic twinned ('geminate') particles. Binds the genomic viral ssDNA and shuttles it into and out of the cell nucleus. Plays a role in protection of the genome from degradation, virus acquisition and transmission by insect vectors, infectivity, and systemic movement. The CP of monopartite geminiviruses is absolutely essential for virus movement. The protein is Capsid protein of Tomato leaf curl virus (strain Australia) (ToLCV).